We begin with the raw amino-acid sequence, 100 residues long: MHLSPQEKDKLLVVTAALLAERRLQRGLKLNHPEAVAFLSLQILEGARDGTTVAELMQVGSTWLSRHQVMDGVAELVSEVQMEATFPDGTKLVTLHQPIR.

Belongs to the urease gamma subunit family. In terms of assembly, heterotrimer of UreA (gamma), UreB (beta) and UreC (alpha) subunits. Three heterotrimers associate to form the active enzyme.

It is found in the cytoplasm. It catalyses the reaction urea + 2 H2O + H(+) = hydrogencarbonate + 2 NH4(+). It participates in nitrogen metabolism; urea degradation; CO(2) and NH(3) from urea (urease route): step 1/1. The sequence is that of Urease subunit gamma from Synechococcus sp. (strain RCC307).